Reading from the N-terminus, the 457-residue chain is 3-isopropylmalate dehydratase large subunit (457 aa).

Positions 337, 397, and 400 each coordinate [4Fe-4S] cluster.

The protein belongs to the aconitase/IPM isomerase family. LeuC type 1 subfamily. In terms of assembly, heterodimer of LeuC and LeuD. Requires [4Fe-4S] cluster as cofactor.

The catalysed reaction is (2R,3S)-3-isopropylmalate = (2S)-2-isopropylmalate. The protein operates within amino-acid biosynthesis; L-leucine biosynthesis; L-leucine from 3-methyl-2-oxobutanoate: step 2/4. Functionally, catalyzes the isomerization between 2-isopropylmalate and 3-isopropylmalate, via the formation of 2-isopropylmaleate. The polypeptide is 3-isopropylmalate dehydratase large subunit (Oenococcus oeni (strain ATCC BAA-331 / PSU-1)).